Consider the following 110-residue polypeptide: Ig kappa chain V region 3547 (110 aa).

The interval 1–23 (AYDMTQTPSSVSAAVGGTVTINC) is framework-1. The segment at 24–34 (QASEDISANLA) is complementarity-determining-1. A framework-2 region spans residues 35–49 (WYQQKPGQPPKLLIY). The tract at residues 50–56 (AASDLAS) is complementarity-determining-2. A framework-3 region spans residues 57–88 (GVPSRFKGSGSGTEYTLTISGVQCADAATYYC). The segment at 89-99 (QSADYSGSAVT) is complementarity-determining-3. The segment at 100–109 (FGGGTEVVVK) is framework-4.

This chain is Ig kappa chain V region 3547, found in Oryctolagus cuniculus (Rabbit).